A 266-amino-acid polypeptide reads, in one-letter code: Undecaprenyl-diphosphatase (266 aa).

The next 8 helical transmembrane spans lie at 3–23, 41–61, 86–106, 108–128, 149–171, 184–204, 220–240, and 245–265; these read MSLLSIVLLGIVEGVTEFLPV, GTETFDIVIQLGAILAVVVLY, VLVGFLPSAVIGAVAYGAIKA, LNTPIIVAVALILGGIAILVI, FGVGLVQCLSMIPGVSRSGATIM, AEYSFFLAIPTMLGATTLALW, IGFVVSFIVAMLVIRWFLGVV, and FAPFAWYRIIAGTAALIWLLA.

The protein belongs to the UppP family.

The protein resides in the cell inner membrane. The enzyme catalyses di-trans,octa-cis-undecaprenyl diphosphate + H2O = di-trans,octa-cis-undecaprenyl phosphate + phosphate + H(+). In terms of biological role, catalyzes the dephosphorylation of undecaprenyl diphosphate (UPP). Confers resistance to bacitracin. The sequence is that of Undecaprenyl-diphosphatase from Rhizorhabdus wittichii (strain DSM 6014 / CCUG 31198 / JCM 15750 / NBRC 105917 / EY 4224 / RW1) (Sphingomonas wittichii).